Consider the following 160-residue polypeptide: Protein shisa-like-2B (160 aa).

Residues 65–85 (IGALIGLGIAALVLLAFVISV) form a helical membrane-spanning segment.

The protein belongs to the shisa family.

It localises to the membrane. The protein is Protein shisa-like-2B of Homo sapiens (Human).